Reading from the N-terminus, the 123-residue chain is Small ribosomal subunit protein uS12 (123 aa).

Asp89 is modified (3-methylthioaspartic acid). The tract at residues 104–123 is disordered; sequence TAGVKDRKQARSKYGAKRPK. A compositionally biased stretch (basic residues) spans 113-123; the sequence is ARSKYGAKRPK.

It belongs to the universal ribosomal protein uS12 family. As to quaternary structure, part of the 30S ribosomal subunit. Contacts proteins S8 and S17. May interact with IF1 in the 30S initiation complex.

In terms of biological role, with S4 and S5 plays an important role in translational accuracy. Its function is as follows. Interacts with and stabilizes bases of the 16S rRNA that are involved in tRNA selection in the A site and with the mRNA backbone. Located at the interface of the 30S and 50S subunits, it traverses the body of the 30S subunit contacting proteins on the other side and probably holding the rRNA structure together. The combined cluster of proteins S8, S12 and S17 appears to hold together the shoulder and platform of the 30S subunit. This Neisseria gonorrhoeae (strain ATCC 700825 / FA 1090) protein is Small ribosomal subunit protein uS12.